A 180-amino-acid chain; its full sequence is MQAEGRGTGGSTGDADGPGGPGIPDGPGGNAGGPGEAGATGGRGPRGAGAARASGPGGGAPRGPHGGAASGLNGCCRCGARGPESRLLEFYLAMPFATPMEAELARRSLAQDAPPLPVPGVLLKEFTVSGNILTIRLTAADHRQLQLSISSCLQQLSLLMWITQCFLPVFLAQPPSGQRR.

Gly residues-rich tracts occupy residues 1-47 (MQAE…GPRG) and 55-66 (GPGGGAPRGPHG). The segment at 1–66 (MQAEGRGTGG…GGGAPRGPHG (66 aa)) is disordered.

Belongs to the CTAG/PCC1 family. As to expression, expressed in testis and ovary and in a wide variety of cancers. Detected in uterine myometrium. Expressed from 18 weeks until birth in human fetal testis. In the adult testis, is strongly expressed in spermatogonia and in primary spermatocytes, but not in post-meiotic cells or in testicular somatic cells (at protein level).

The protein resides in the cytoplasm. The sequence is that of Cancer/testis antigen 1 (CTAG1A) from Homo sapiens (Human).